Reading from the N-terminus, the 466-residue chain is ATP synthase subunit beta (466 aa).

ATP is bound at residue 152-159 (GGAGVGKT).

The protein belongs to the ATPase alpha/beta chains family. In terms of assembly, F-type ATPases have 2 components, CF(1) - the catalytic core - and CF(0) - the membrane proton channel. CF(1) has five subunits: alpha(3), beta(3), gamma(1), delta(1), epsilon(1). CF(0) has three main subunits: a(1), b(2) and c(9-12). The alpha and beta chains form an alternating ring which encloses part of the gamma chain. CF(1) is attached to CF(0) by a central stalk formed by the gamma and epsilon chains, while a peripheral stalk is formed by the delta and b chains.

It localises to the cell inner membrane. It catalyses the reaction ATP + H2O + 4 H(+)(in) = ADP + phosphate + 5 H(+)(out). Produces ATP from ADP in the presence of a proton gradient across the membrane. The catalytic sites are hosted primarily by the beta subunits. This chain is ATP synthase subunit beta, found in Sulfurovum sp. (strain NBC37-1).